The following is a 471-amino-acid chain: MVQAKSKGFQAGVKDYRLTYYTPDYTPKDTDLLACFRVTPQPGVPPEEAGAAVAAESSTGTWTTVWTDNLTDLDRYKGRCYDIEPVPNEDNQFFCFVAYPLDLFEEGSVTNILTSIVGNVFGFKALRGLRLEDIRFPVALIKTFQGPPHGITVERDKLNKYGRPLLGCTIKPKLGLSAKNYGRAVYECLRGGLDFTKDDENINSQPFMRWRDRFLFVQEAIVKSQAETNEVKGHYLNVTAPTCEQMMQRAEFAAEIKTPIIMHDYLTGGFTANTTLAKFCRDKGLLLHIHRAMHAVIDRQKNHGIHFRVLAKCLRLSGGDHLHSGTVVGKLEGERGITMGFVDLMREDYVEEDRARGIFFTQDYASLPGVMPVASGGIHVWHMPALVEIFGDDSCLQFGGGTLGHPWGNAPGATANRVALEACIQARNEGRSLAREGNDVIREACRWSPELAAACELWKEIKFEFEAMDTL.

Substrate contacts are provided by Asn-119 and Thr-169. The active-site Proton acceptor is Lys-171. Substrate is bound at residue Lys-173. Residues Lys-197, Asp-199, and Glu-200 each coordinate Mg(2+). Lys-197 is subject to N6-carboxylysine. His-290 acts as the Proton acceptor in catalysis. Substrate contacts are provided by Arg-291, His-323, and Ser-375.

It belongs to the RuBisCO large chain family. Type I subfamily. As to quaternary structure, heterohexadecamer of 8 large chains and 8 small chains; disulfide-linked. The disulfide link is formed within the large subunit homodimers. It depends on Mg(2+) as a cofactor. Post-translationally, the disulfide bond which can form in the large chain dimeric partners within the hexadecamer appears to be associated with oxidative stress and protein turnover.

It localises to the carboxysome. The catalysed reaction is 2 (2R)-3-phosphoglycerate + 2 H(+) = D-ribulose 1,5-bisphosphate + CO2 + H2O. The enzyme catalyses D-ribulose 1,5-bisphosphate + O2 = 2-phosphoglycolate + (2R)-3-phosphoglycerate + 2 H(+). In terms of biological role, ruBisCO catalyzes two reactions: the carboxylation of D-ribulose 1,5-bisphosphate, the primary event in carbon dioxide fixation, as well as the oxidative fragmentation of the pentose substrate in the photorespiration process. Both reactions occur simultaneously and in competition at the same active site. The protein is Ribulose bisphosphate carboxylase large chain of Microcystis aeruginosa (strain NIES-843 / IAM M-2473).